A 137-amino-acid polypeptide reads, in one-letter code: uncharacterized protein (137 aa).

The helical transmembrane segment at 75 to 91 (MFLDAMVILAVASGVSL) threads the bilayer. Residues 93–116 (PQLPGRRSHNASTPGAKKPGKDHG) are disordered.

It localises to the membrane. This is an uncharacterized protein from Saccharomyces cerevisiae (strain ATCC 204508 / S288c) (Baker's yeast).